The primary structure comprises 333 residues: Acetyltransferase Pat (333 aa).

3',5'-cyclic AMP-binding positions include 88–91 (GEIA), 98–99 (RS), and R138. In terms of domain architecture, N-acetyltransferase spans 156–318 (LMLRPVLPGD…GELSLGREMV (163 aa)). H173 is a binding site for substrate. Residue D214 coordinates Mg(2+). Substrate is bound by residues 238 to 240 (FTV), 246 to 251 (GRGIGS), N277, and R286.

In terms of assembly, homodimer. The cofactor is Mg(2+).

Its activity is regulated as follows. Autoinhibited and allosterically activated by 3,5-cyclic adenosine monophosphate (cAMP). An extensive conformational rearrangement relieves this autoinhibition by means of a substrate-mimicking lid that covers the protein-substrate binding surface. Functionally, catalyzes specifically the acetylation of the epsilon-amino group of a highly conserved lysine residue in acetyl-CoA synthetase (ACS). This acetylation results in the inactivation of ACS activity and could be important for mycobacteria to adjust to environmental changes. This chain is Acetyltransferase Pat, found in Mycobacterium tuberculosis (strain ATCC 25618 / H37Rv).